The sequence spans 158 residues: Transcription elongation factor GreA (158 aa).

Positions 48 to 74 form a coiled coil; the sequence is EYDAAKNRQGFIEGRIKELNDKIARAE.

Belongs to the GreA/GreB family.

In terms of biological role, necessary for efficient RNA polymerase transcription elongation past template-encoded arresting sites. The arresting sites in DNA have the property of trapping a certain fraction of elongating RNA polymerases that pass through, resulting in locked ternary complexes. Cleavage of the nascent transcript by cleavage factors such as GreA or GreB allows the resumption of elongation from the new 3'terminus. GreA releases sequences of 2 to 3 nucleotides. The polypeptide is Transcription elongation factor GreA (Syntrophotalea carbinolica (strain DSM 2380 / NBRC 103641 / GraBd1) (Pelobacter carbinolicus)).